A 567-amino-acid polypeptide reads, in one-letter code: uncharacterized protein (567 aa).

Helical transmembrane passes span 20–40, 69–89, 95–115, 126–146, 168–188, and 528–548; these read FTILAFFYISSIFFLLCSGVL, SLETAWYLISAVAVFIASVFI, AYLTLLAITWIVLTITDVALI, ILLNILYNLFGAILLSLFMCL, IPLVSAIIIAILITAVIYLLF, and IFGSSIMDILKYIFGLGLLAI.

It localises to the cell membrane. This is an uncharacterized protein from Escherichia coli (strain K12).